Reading from the N-terminus, the 121-residue chain is MARIAGIDLPREKRVEIGLTYIYGIGLPTSQKILEVTGVNPDTRVKDLTEEEVNSIRNYIKDLTVEGDLRREVALNIKRLVEIGSYRGIRHRKGLPLRGQKTKTNARTRKGPKKTIANKKK.

Residues 93-121 are disordered; the sequence is KGLPLRGQKTKTNARTRKGPKKTIANKKK.

It belongs to the universal ribosomal protein uS13 family. Part of the 30S ribosomal subunit. Forms a loose heterodimer with protein S19. Forms two bridges to the 50S subunit in the 70S ribosome.

Functionally, located at the top of the head of the 30S subunit, it contacts several helices of the 16S rRNA. In the 70S ribosome it contacts the 23S rRNA (bridge B1a) and protein L5 of the 50S subunit (bridge B1b), connecting the 2 subunits; these bridges are implicated in subunit movement. Contacts the tRNAs in the A and P-sites. The protein is Small ribosomal subunit protein uS13 of Clostridium perfringens (strain ATCC 13124 / DSM 756 / JCM 1290 / NCIMB 6125 / NCTC 8237 / Type A).